The sequence spans 89 residues: Cell division topological specificity factor (89 aa).

It belongs to the MinE family.

Functionally, prevents the cell division inhibition by proteins MinC and MinD at internal division sites while permitting inhibition at polar sites. This ensures cell division at the proper site by restricting the formation of a division septum at the midpoint of the long axis of the cell. The chain is Cell division topological specificity factor from Photorhabdus laumondii subsp. laumondii (strain DSM 15139 / CIP 105565 / TT01) (Photorhabdus luminescens subsp. laumondii).